A 301-amino-acid chain; its full sequence is 33 kDa chaperonin (301 aa).

Disulfide bonds link Cys239–Cys241 and Cys272–Cys275.

It belongs to the HSP33 family. Under oxidizing conditions two disulfide bonds are formed involving the reactive cysteines. Under reducing conditions zinc is bound to the reactive cysteines and the protein is inactive.

It is found in the cytoplasm. In terms of biological role, redox regulated molecular chaperone. Protects both thermally unfolding and oxidatively damaged proteins from irreversible aggregation. Plays an important role in the bacterial defense system toward oxidative stress. This chain is 33 kDa chaperonin, found in Nostoc punctiforme (strain ATCC 29133 / PCC 73102).